Here is a 344-residue protein sequence, read N- to C-terminus: Phenylalanine--tRNA ligase alpha subunit (344 aa).

Residue glutamate 256 participates in Mg(2+) binding.

It belongs to the class-II aminoacyl-tRNA synthetase family. Phe-tRNA synthetase alpha subunit type 1 subfamily. As to quaternary structure, tetramer of two alpha and two beta subunits. Mg(2+) serves as cofactor.

It is found in the cytoplasm. The enzyme catalyses tRNA(Phe) + L-phenylalanine + ATP = L-phenylalanyl-tRNA(Phe) + AMP + diphosphate + H(+). The protein is Phenylalanine--tRNA ligase alpha subunit of Bacillus pumilus (strain SAFR-032).